We begin with the raw amino-acid sequence, 3432 residues long: Genome polyprotein (3432 aa).

The interaction with host EXOC1 stretch occupies residues 2-15 (TKKPGGPGKNRAIN). Residues 2-109 (TKKPGGPGKN…RKQNKRGGNE (108 aa)) are Cytoplasmic-facing. Positions 37-72 (LLDGRGPVRFVLALITFFKFTALAPTKALLGRWKAV) are hydrophobic; homodimerization of capsid protein C. Positions 106 to 127 (GGNEGSIMWLASLAVVIACAGA) are cleaved as a propeptide — ER anchor for the capsid protein C, removed in mature form by serine protease NS3. The chain crosses the membrane as a helical span at residues 110 to 130 (GSIMWLASLAVVIACAGAMKL). Over 131–253 (SNFQGKLLMT…ATRYLMKTEN (123 aa)) the chain is Extracellular. An N-linked (GlcNAc...) asparagine; by host glycan is attached at N142. A helical membrane pass occupies residues 254-274 (WIIRNPGYAFLAAVLGWMLGS). At 275 to 279 (NNGQR) the chain is on the cytoplasmic side. Residues 280–294 (VVFTILLLLVAPAYS) traverse the membrane as a helical segment. The Extracellular portion of the chain corresponds to 295–746 (FNCLGMGNRD…QVFGGAFRTL (452 aa)). 6 cysteine pairs are disulfide-bonded: C297–C324, C354–C410, C354–C415, C368–C399, C386–C410, and C386–C415. Residues 392–405 (DRGWGNGCGLFGKG) are fusion peptide. The N-linked (GlcNAc...) asparagine; by host glycan is linked to N448. 2 cysteine pairs are disulfide-bonded: C484–C581 and C598–C629. The chain crosses the membrane as a helical span at residues 747–767 (FGGMSWITQGLMGALLLWMGV). At 768 to 773 (NARDRS) the chain is on the cytoplasmic side. Residues 774 to 794 (IALAFLATGGVLVFLATNVHA) traverse the membrane as a helical segment. The Extracellular portion of the chain corresponds to 795-1219 (DTGCAIDITR…AFAEANSGGD (425 aa)). 6 disulfide bridges follow: C798–C809, C849–C937, C973–C1017, C1074–C1123, C1085–C1106, and C1107–C1110. 2 N-linked (GlcNAc...) asparagine; by host glycosylation sites follow: N924 and N1001. The helical transmembrane segment at 1220–1240 (VLHLALIAVFKIQPAFLVMNM) threads the bilayer. Over 1241 to 1250 (LSTRWTNQEN) the chain is Cytoplasmic. The chain crosses the membrane as a helical span at residues 1251–1271 (VVLVLGAAFFQLASVDLQIGV). H1272 is a topological domain (lumenal). A helical membrane pass occupies residues 1273-1293 (GILNAAAIAWMIVRAITFPTT). Over 1294–1309 (SSVTMPVLALLTPGMR) the chain is Cytoplasmic. The chain crosses the membrane as a helical span at residues 1310-1330 (ALYLDTYRIILLVIGICSLLH). Residues 1331-1341 (ERKKTMAKKKG) lie on the Lumenal side of the membrane. The chain crosses the membrane as a helical span at residues 1342 to 1362 (AVLLGLALTSTGWFSPTTIAA). Residues 1363–1374 (GLMVCNPNKKRG) lie on the Cytoplasmic side of the membrane. The chain crosses the membrane as a helical span at residues 1375 to 1395 (WPATEFLSAVGLMFAIVGGLA). Residues 1396-1398 (ELD) lie on the Lumenal side of the membrane. A helical membrane pass occupies residues 1399–1419 (IESMSIPFMLAGLMAVSYVVS). Residues 1420–1476 (GKATDMWLERAADISWEMDAAITGSSRRLDVKLDDDGDFHLIDDPGVPWKVWVLRMS) are Cytoplasmic-facing. Positions 1427–1466 (LERAADISWEMDAAITGSSRRLDVKLDDDGDFHLIDDPGV) are interacts with and activates NS3 protease. An intramembrane region (helical) is located at residues 1477-1497 (CIGLAALTPWAIVPAAFGYWL). At 1498 to 2173 (TLKTTKRGGV…RMALEELPDA (676 aa)) the chain is on the cytoplasmic side. A Peptidase S7 domain is found at 1505-1682 (GGVFWDTPSP…DRQEEPVPEA (178 aa)). Active-site charge relay system; for serine protease NS3 activity residues include H1555, D1579, and S1639. One can recognise a Helicase ATP-binding domain in the interval 1685-1841 (PNMLRKRQMT…DSNAPIHDLQ (157 aa)). The important for RNA-binding stretch occupies residues 1689–1692 (RKRQ). Residue 1698 to 1705 (LHPGSGKT) participates in ATP binding. The short motif at 1789-1792 (DEAH) is the DEAH box element. Residues 1852 to 2017 (GYEWITEYAG…GLVAQLYGPE (166 aa)) enclose the Helicase C-terminal domain. K1893 is modified (N6-acetyllysine; by host). The disordered stretch occupies residues 1950 to 1972 (NPSPITSASAAQRRGRVGRNPNQ). Residues 2168–2172 (EELPD) are regulates the ATPase activity of NS3 helicase. A helical membrane pass occupies residues 2174–2194 (LETITLIVAITVMTGGFFLLM). Residues 2195 to 2199 (MQRKG) are Lumenal-facing. Residues 2200–2220 (IGKMGLGALVLTLATFFLWAA) constitute an intramembrane region (helical). E2221 is a topological domain (lumenal). A helical transmembrane segment spans residues 2222–2242 (VPGTKIAGTLLIALLLMVVLI). Over 2243–2257 (PEPEKQRSQTDNQLA) the chain is Cytoplasmic. Residues 2258-2278 (VFLICVLTVVGVVAANEYGML) traverse the membrane as a helical segment. Over 2279–2311 (EKTKADLKSMFGGKTQASGLTGLPSMALDLRPA) the chain is Lumenal. Positions 2312–2332 (TAWALYGGSTVVLTPLLKHLI) form an intramembrane region, helical. Topologically, residues 2333-2368 (TSEYVTTSLASINSQAGSLFVLPRGVPFTDLDLTVG) are lumenal. Residues 2369–2389 (LVFLGCWGQITLTTFLTAMVL) form a helical membrane-spanning segment. Over 2390–2444 (ATLHYGYMLPGWQAEALRAAQRRTAAGIMKNAVVDGMVATDVPELERTTPLMQKK) the chain is Cytoplasmic. Residues 2445–2465 (VGQVLLIGVSVAAFLVNPNVT) form a helical membrane-spanning segment. The Lumenal portion of the chain corresponds to 2466–2469 (TVRE). The helical transmembrane segment at 2470 to 2490 (AGVLVTAATLTLWDNGASAVW) threads the bilayer. Residues 2491–3432 (NSTTATGLCH…DVLIQEDRVI (942 aa)) lie on the Cytoplasmic side of the membrane. Residues 2528–2793 (GRPGGRTLGE…DVNLGSGTRA (266 aa)) form the mRNA cap 0-1 NS5-type MT domain. S-adenosyl-L-methionine is bound at residue S2583. A Phosphoserine modification is found at S2583. The For 2'-O-MTase activity role is filled by K2588. Residues G2613, W2614, T2631, K2632, D2658, and V2659 each contribute to the S-adenosyl-L-methionine site. The For 2'-O-MTase activity role is filled by D2673. I2674 contributes to the S-adenosyl-L-methionine binding site. Residues K2709 and E2745 each act as for 2'-O-MTase activity in the active site. Y2747 is a binding site for S-adenosyl-L-methionine. Residues E2967, H2971, C2976, and C2979 each coordinate Zn(2+). Residues 3057 to 3209 (GKMYADDTAG…KPLDDRFATA (153 aa)) form the RdRp catalytic domain. The Zn(2+) site is built by H3244, C3260, and C3379.

This sequence in the N-terminal section; belongs to the class I-like SAM-binding methyltransferase superfamily. mRNA cap 0-1 NS5-type methyltransferase family. Homodimer. Interacts (via N-terminus) with host EXOC1 (via C-terminus); this interaction results in EXOC1 degradation through the proteasome degradation pathway. As to quaternary structure, forms heterodimers with envelope protein E in the endoplasmic reticulum and Golgi. In terms of assembly, homodimer; in the endoplasmic reticulum and Golgi. Interacts with protein prM. Interacts with non-structural protein 1. Interacts with host HSPA5. Homodimer; Homohexamer when secreted. Interacts with envelope protein E. NS1 interacts with NS4B. Interacts with host complement protein CFH; this interaction leads to the degradation of C3. As to quaternary structure, interacts (via N-terminus) with serine protease NS3. In terms of assembly, forms a heterodimer with serine protease NS3. May form homooligomers. Forms a heterodimer with NS2B. Interacts with non-structural protein 2A (via N-terminus). Interacts with NS4B. Interacts with unphosphorylated RNA-directed RNA polymerase NS5; this interaction stimulates RNA-directed RNA polymerase NS5 guanylyltransferase activity. Interacts with host ILF2. As to quaternary structure, interacts with serine protease NS3. In terms of assembly, homodimer. Interacts with host STAT2; this interaction inhibits the phosphorylation of the latter, and, when all viral proteins are present (polyprotein), targets STAT2 for degradation. Interacts with serine protease NS3. Requires Mn(2+) as cofactor. The cofactor is Mg(2+). In terms of processing, specific enzymatic cleavages in vivo yield mature proteins. Cleavages in the lumen of endoplasmic reticulum are performed by host signal peptidase, whereas cleavages in the cytoplasmic side are performed by serine protease NS3. Signal cleavage at the 2K-4B site requires a prior NS3 protease-mediated cleavage at the 4A-2K site. Cleaved in post-Golgi vesicles by a host furin, releasing the mature small envelope protein M, and peptide pr. This cleavage is incomplete as up to 30% of viral particles still carry uncleaved prM. Post-translationally, N-glycosylated. In terms of processing, N-glycosylated. The excreted form is glycosylated and this is required for efficient secretion of the protein from infected cells. Acetylated by host KAT5. Acetylation modulates NS3 RNA-binding and unwinding activities and plays an important positive role for viral replication. Post-translationally, phosphorylated on serines residues. This phosphorylation may trigger NS5 nuclear localization.

The protein localises to the virion. Its subcellular location is the host nucleus. It is found in the host cytoplasm. The protein resides in the host perinuclear region. It localises to the secreted. The protein localises to the virion membrane. Its subcellular location is the host endoplasmic reticulum membrane. It is found in the host cell surface. The enzyme catalyses Selective hydrolysis of -Xaa-Xaa-|-Yaa- bonds in which each of the Xaa can be either Arg or Lys and Yaa can be either Ser or Ala.. It carries out the reaction RNA(n) + a ribonucleoside 5'-triphosphate = RNA(n+1) + diphosphate. The catalysed reaction is a ribonucleoside 5'-triphosphate + H2O = a ribonucleoside 5'-diphosphate + phosphate + H(+). It catalyses the reaction ATP + H2O = ADP + phosphate + H(+). The enzyme catalyses a 5'-end (5'-triphosphoguanosine)-ribonucleoside in mRNA + S-adenosyl-L-methionine = a 5'-end (N(7)-methyl 5'-triphosphoguanosine)-ribonucleoside in mRNA + S-adenosyl-L-homocysteine. It carries out the reaction a 5'-end (N(7)-methyl 5'-triphosphoguanosine)-ribonucleoside in mRNA + S-adenosyl-L-methionine = a 5'-end (N(7)-methyl 5'-triphosphoguanosine)-(2'-O-methyl-ribonucleoside) in mRNA + S-adenosyl-L-homocysteine + H(+). Plays a role in virus budding by binding to the cell membrane and gathering the viral RNA into a nucleocapsid that forms the core of a mature virus particle. During virus entry, may induce genome penetration into the host cytoplasm after hemifusion induced by the surface proteins. Can migrate to the cell nucleus where it modulates host functions. Overcomes the anti-viral effects of host EXOC1 by sequestering and degrading the latter through the proteasome degradation pathway. In terms of biological role, inhibits RNA silencing by interfering with host Dicer. Functionally, prevents premature fusion activity of envelope proteins in trans-Golgi by binding to envelope protein E at pH6.0. After virion release in extracellular space, gets dissociated from E dimers. Its function is as follows. Acts as a chaperone for envelope protein E during intracellular virion assembly by masking and inactivating envelope protein E fusion peptide. prM is the only viral peptide matured by host furin in the trans-Golgi network probably to avoid catastrophic activation of the viral fusion activity in acidic Golgi compartment prior to virion release. prM-E cleavage is inefficient, and many virions are only partially matured. These uncleaved prM would play a role in immune evasion. May play a role in virus budding. Exerts cytotoxic effects by activating a mitochondrial apoptotic pathway through M ectodomain. May display a viroporin activity. In terms of biological role, binds to host cell surface receptor and mediates fusion between viral and cellular membranes. Efficient virus attachment to cell is, at least in part, mediated by host HSPA5. Envelope protein is synthesized in the endoplasmic reticulum in the form of heterodimer with protein prM. They play a role in virion budding in the ER, and the newly formed immature particle is covered with 60 spikes composed of heterodimer between precursor prM and envelope protein E. The virion is transported to the Golgi apparatus where the low pH causes dissociation of PrM-E heterodimers and formation of E homodimers. prM-E cleavage is inefficient, and many virions are only partially matured. These uncleaved prM would play a role in immune evasion. Functionally, involved in immune evasion, pathogenesis and viral replication. Once cleaved off the polyprotein, is targeted to three destinations: the viral replication cycle, the plasma membrane and the extracellular compartment. Essential for viral replication. Required for formation of the replication complex and recruitment of other non-structural proteins to the ER-derived membrane structures. Excreted as a hexameric lipoparticle that plays a role against host immune response. Antagonizing the complement function. Binds to the host macrophages and dendritic cells. Inhibits signal transduction originating from Toll-like receptor 3 (TLR3). Its function is as follows. Component of the viral RNA replication complex that functions in virion assembly and antagonizes the host alpha/beta interferon antiviral response. Required cofactor for the serine protease function of NS3. May have membrane-destabilizing activity and form viroporins. In terms of biological role, displays three enzymatic activities: serine protease, NTPase and RNA helicase. NS3 serine protease, in association with NS2B, performs its autocleavage and cleaves the polyprotein at dibasic sites in the cytoplasm: C-prM, NS2A-NS2B, NS2B-NS3, NS3-NS4A, NS4A-2K and NS4B-NS5. NS3 RNA helicase binds RNA and unwinds dsRNA in the 3' to 5' direction. Functionally, regulates the ATPase activity of the NS3 helicase activity. NS4A allows NS3 helicase to conserve energy during unwinding. Its function is as follows. Functions as a signal peptide for NS4B and is required for the interferon antagonism activity of the latter. Induces the formation of ER-derived membrane vesicles where the viral replication takes place. Inhibits interferon (IFN)-induced host STAT1 phosphorylation and nuclear translocation, thereby preventing the establishment of cellular antiviral state by blocking the IFN-alpha/beta pathway. Inhibits STAT2 translocation in the nucleus after IFN-alpha treatment. In terms of biological role, replicates the viral (+) and (-) RNA genome. Performs the capping of genomes in the cytoplasm. NS5 methylates viral RNA cap at guanine N-7 and ribose 2'-O positions. Besides its role in RNA genome replication, also prevents the establishment of cellular antiviral state by blocking the interferon-alpha/beta (IFN-alpha/beta) signaling pathway. Inhibits host TYK2 and STAT2 phosphorylation, thereby preventing activation of JAK-STAT signaling pathway. This Ardeidae (herons) protein is Genome polyprotein.